We begin with the raw amino-acid sequence, 795 residues long: Nucleolar complex protein 3 homolog (795 aa).

Disordered stretches follow at residues 1–88 (MKPM…PLDM), 124–144 (RDDVINKYEKMPRKSKSEPEK), and 168–190 (IPSEEQEENEEEMDTEHTEEVPE). 2 stretches are compositionally biased toward basic and acidic residues: residues 22-39 (LKLDNKLKNKQFKQESSA) and 46-58 (QKQLREAVRDVRS). Over residues 74 to 88 (EEEYEVEEESLPLDM) the composition is skewed to acidic residues. Residues 171 to 181 (EEQEENEEEMD) are compositionally biased toward acidic residues. Residues 447–492 (SYKDKKKNLSRMQRKWKKAEEKLERELLEAEASESKEKKLKLNTET) adopt a coiled-coil conformation.

It belongs to the CBF/MAK21 family.

The protein localises to the nucleus. The protein resides in the nucleolus. In Xenopus laevis (African clawed frog), this protein is Nucleolar complex protein 3 homolog (noc3l).